We begin with the raw amino-acid sequence, 899 residues long: MTDKSIKELALSVGRPVEKLLEQAREAGLPQRTADDIITTEQQDTLVNYLKKVHGQESGNTGKIALKRKTTSTAKVASTSGKAKTINVEVRKKQVFAKPNPEQIAAEAKARAEAEAKARAEQQAREAAEQKARLQTEQKAKATLDAMRAAHQQDSAAQSAPKAAVVVKKRGGGTVKPAPKPAETLEQKKAREAQTAQLKATEEAARRKAAEEAQQRTLEQMRKMASKYSNDDATATIRVIDDSPLASGLVGQAYEDSFNQEDREIKRGGATTNPRAGKKGGRRGQEEQSFVNHNKRGLKSSQANKHGFEKPVKKQVYDVEIGSSIVVADLAQKMAIKVREVIKTLMKMGELVNQNQTIDQDTAALVVEEMGHNPVLVSDTQAEDNLLEAAEEARGEQTTRPPVVTIMGHVDHGKTSLLDRIRRSKVAAGEAGGITQHIGAYHVETDKGIITFLDTPGHAAFTSMRARGAKATDIVVLVVAADDGVMPQTAEAIDHARAAGTPIIVAINKMDKESADPDRVLNELTTKEIVPEEWGGDVPVAKVSAHTGQGIDELLDLILIQSELMELKASAEGAAQGVVIEARVDKGRGAVTSILVQNGTLNIGDLVLAGSSYGRVRAMSDENGKPIKSAGPSIPVEILGLPEAPMAGDEVLVVNDEKKAREVADARADREREKRIERQSAMRLENIMASMGKKDVPTVNVVLRTDVRGTLEALNAALHELSTDEVKVRVISSGVGAITESDVILAESSEAVLLGFNVRADTAARQKSDQDGIDIRYYSIIYELIDDVKDAMSGKLAPEHRETILGVAQVREVFRSSKFGAAAGCMVMEGVIHRNKPIRVLRDDVVIFQGELESLRRYKDVVDEVRAGMECGLAVKGYNDIKPLDKIEVYDVQMVKRSL.

3 disordered regions span residues Ala-116 to Gln-135, Arg-170 to Lys-189, and Asp-262 to His-306. Residues Thr-399 to Lys-568 form the tr-type G domain. Residues Gly-408–Thr-415 are G1. Gly-408–Thr-415 serves as a coordination point for GTP. The tract at residues Gly-433–His-437 is G2. The segment at Asp-454–Gly-457 is G3. GTP contacts are provided by residues Asp-454–His-458 and Asn-508–Asp-511. The G4 stretch occupies residues Asn-508–Asp-511. The segment at Ser-544–His-546 is G5.

It belongs to the TRAFAC class translation factor GTPase superfamily. Classic translation factor GTPase family. IF-2 subfamily.

The protein resides in the cytoplasm. In terms of biological role, one of the essential components for the initiation of protein synthesis. Protects formylmethionyl-tRNA from spontaneous hydrolysis and promotes its binding to the 30S ribosomal subunits. Also involved in the hydrolysis of GTP during the formation of the 70S ribosomal complex. In Acinetobacter baumannii (strain AB307-0294), this protein is Translation initiation factor IF-2.